A 153-amino-acid polypeptide reads, in one-letter code: MNRILINKELGDRSITKKFVKEAVEKILEHLNIDNVEISITLTDDSTIKEINRQWRGKDKPTDVLSFPIDEKPPKYRYRILGDVVISLPYAKKQAEEIGLPYREEIIRLLIHGILHLLGYDHERSEKEAQVMFSLQDEIFENIRSYFSRTTQT.

3 residues coordinate Zn(2+): H112, H116, and H122.

It belongs to the endoribonuclease YbeY family. Zn(2+) serves as cofactor.

Its subcellular location is the cytoplasm. Its function is as follows. Single strand-specific metallo-endoribonuclease involved in late-stage 70S ribosome quality control and in maturation of the 3' terminus of the 16S rRNA. In Persephonella marina (strain DSM 14350 / EX-H1), this protein is Endoribonuclease YbeY.